Here is a 534-residue protein sequence, read N- to C-terminus: Probable alpha-galactosidase A (534 aa).

An N-terminal signal peptide occupies residues 1–25 (MRLITRWIPLANALASTMPVQVVAS). Cysteines 47 and 79 form a disulfide. Residues Asn50, Asn88, Asn94, and Asn124 are each glycosylated (N-linked (GlcNAc...) asparagine). A disulfide bridge links Cys127 with Cys157. Asp155 (nucleophile) is an active-site residue. Residue Asn204 is glycosylated (N-linked (GlcNAc...) asparagine). Asp213 serves as the catalytic Proton donor. In terms of domain architecture, Ricin B-type lectin spans 413 to 534 (CSQVIPTGLI…GLPAGVHVAL (122 aa)). Cysteines 430 and 443 form a disulfide. N-linked (GlcNAc...) asparagine glycosylation is present at Asn444. The cysteines at positions 468 and 481 are disulfide-linked.

The protein belongs to the glycosyl hydrolase 27 family.

It is found in the secreted. It carries out the reaction Hydrolysis of terminal, non-reducing alpha-D-galactose residues in alpha-D-galactosides, including galactose oligosaccharides, galactomannans and galactolipids.. Hydrolyzes a variety of simple alpha-D-galactoside as well as more complex molecules such as oligosaccharides and polysaccharides. The protein is Probable alpha-galactosidase A (aglA) of Aspergillus flavus (strain ATCC 200026 / FGSC A1120 / IAM 13836 / NRRL 3357 / JCM 12722 / SRRC 167).